We begin with the raw amino-acid sequence, 527 residues long: Amine oxidase [flavin-containing] A (527 aa).

Position 1 is an N-acetylmethionine (M1). The Cytoplasmic portion of the chain corresponds to 1-497; the sequence is MERQEKANNA…RTFWERNLPS (497 aa). Phosphoserine is present on S383. Residue C406 is modified to S-8alpha-FAD cysteine. The helical; Anchor for type IV membrane protein transmembrane segment at 498–518 threads the bilayer; that stretch reads VTGLLKIIGFSTSVTALWLAV. The Mitochondrial intermembrane portion of the chain corresponds to 519–527; it reads YKFRLLTRS. Residues 520–522 are interaction with membrane phospholipid headgroups; sequence KFR.

Belongs to the flavin monoamine oxidase family. Monomer, homo- or heterodimer (containing two subunits of similar size). Each subunit contains a covalently bound flavin. Enzymatically active as monomer. FAD is required as a cofactor.

It is found in the mitochondrion outer membrane. The catalysed reaction is a secondary aliphatic amine + O2 + H2O = a primary amine + an aldehyde + H2O2. It carries out the reaction a primary methyl amine + O2 + H2O = an aldehyde + H2O2 + NH4(+). It catalyses the reaction (R)-adrenaline + O2 + H2O = (R)-3,4-dihydroxymandelaldehyde + methylamine + H2O2. The enzyme catalyses dopamine + O2 + H2O = 3,4-dihydroxyphenylacetaldehyde + H2O2 + NH4(+). The catalysed reaction is tyramine + O2 + H2O = (4-hydroxyphenyl)acetaldehyde + H2O2 + NH4(+). It carries out the reaction (R)-noradrenaline + O2 + H2O = (R)-3,4-dihydroxymandelaldehyde + H2O2 + NH4(+). It catalyses the reaction serotonin + O2 + H2O = (5-hydroxyindol-3-yl)acetaldehyde + H2O2 + NH4(+). The enzyme catalyses kynuramine + O2 + H2O = 3-(2-aminophenyl)-3-oxopropanal + H2O2 + NH4(+). The catalysed reaction is tryptamine + O2 + H2O = indole-3-acetaldehyde + H2O2 + NH4(+). It carries out the reaction 2-phenylethylamine + O2 + H2O = 2-phenylacetaldehyde + H2O2 + NH4(+). Its function is as follows. Catalyzes the oxidative deamination of primary and some secondary amine such as neurotransmitters, with concomitant reduction of oxygen to hydrogen peroxide and has important functions in the metabolism of neuroactive and vasoactive amines in the central nervous system and peripheral tissues. Preferentially oxidizes serotonin. Also catalyzes the oxidative deamination of kynuramine to 3-(2-aminophenyl)-3-oxopropanal that can spontaneously condense to 4-hydroxyquinoline. This is Amine oxidase [flavin-containing] A from Sus scrofa (Pig).